A 604-amino-acid polypeptide reads, in one-letter code: Glucoamylase 1 (604 aa).

A signal peptide spans 1–25 (MQLFNLPLKVSFFLVLSYFSLLVSA). The tract at residues 26 to 115 (ASIPSSASVQ…EFYIKYEVSG (90 aa)) is adsorption to raw starch. Positions 26 to 130 (ASIPSSASVQ…NNNSANYQVS (105 aa)) constitute a CBM21 domain. The interval 116–604 (KTYYDNNNSA…SYAKAGAPAA (489 aa)) is starch degradation. Residue Asn-122 is glycosylated (N-linked (GlcNAc...) asparagine). The disordered stretch occupies residues 127 to 164 (YQVSTSKPTTTTATATTTTAPSTSTTTPPSRSEPATFP). Low complexity predominate over residues 130-162 (STSKPTTTTATATTTTAPSTSTTTPPSRSEPAT). N-linked (GlcNAc...) asparagine glycosylation is found at Asn-167, Asn-230, and Asn-236. Trp-279 contacts substrate. Asp-336 (proton acceptor) is an active-site residue. The Proton donor role is filled by Glu-339. N-linked (GlcNAc...) asparagine glycosylation is present at Asn-564.

The protein belongs to the glycosyl hydrolase 15 family.

The catalysed reaction is Hydrolysis of terminal (1-&gt;4)-linked alpha-D-glucose residues successively from non-reducing ends of the chains with release of beta-D-glucose.. The protein is Glucoamylase 1 of Rhizopus oryzae (Mucormycosis agent).